The sequence spans 452 residues: Bifunctional protein GlmU (452 aa).

Residues 1 to 224 are pyrophosphorylase; sequence MNIVILAAGM…VWETHGVNSK (224 aa). UDP-N-acetyl-alpha-D-glucosamine is bound by residues 6 to 9, Lys-20, Gln-71, 76 to 77, 98 to 100, Gly-135, Glu-149, Asn-164, and Asn-222; these read LAAG, GT, and YGD. Asp-100 contacts Mg(2+). Asn-222 serves as a coordination point for Mg(2+). The tract at residues 225-245 is linker; that stretch reads VQLAELERVHQNNIARALLEH. Residues 246 to 452 form an N-acetyltransferase region; that stretch reads GVTLADPARI…GWQRPVKIKK (207 aa). Residues Arg-328 and Lys-346 each coordinate UDP-N-acetyl-alpha-D-glucosamine. His-358 functions as the Proton acceptor in the catalytic mechanism. Tyr-361 and Asn-372 together coordinate UDP-N-acetyl-alpha-D-glucosamine. Acetyl-CoA contacts are provided by residues Ala-375, 381–382, Ser-400, Ala-418, and Arg-435; that span reads NY.

It in the N-terminal section; belongs to the N-acetylglucosamine-1-phosphate uridyltransferase family. In the C-terminal section; belongs to the transferase hexapeptide repeat family. Homotrimer. It depends on Mg(2+) as a cofactor.

It localises to the cytoplasm. It catalyses the reaction alpha-D-glucosamine 1-phosphate + acetyl-CoA = N-acetyl-alpha-D-glucosamine 1-phosphate + CoA + H(+). The enzyme catalyses N-acetyl-alpha-D-glucosamine 1-phosphate + UTP + H(+) = UDP-N-acetyl-alpha-D-glucosamine + diphosphate. The protein operates within nucleotide-sugar biosynthesis; UDP-N-acetyl-alpha-D-glucosamine biosynthesis; N-acetyl-alpha-D-glucosamine 1-phosphate from alpha-D-glucosamine 6-phosphate (route II): step 2/2. It functions in the pathway nucleotide-sugar biosynthesis; UDP-N-acetyl-alpha-D-glucosamine biosynthesis; UDP-N-acetyl-alpha-D-glucosamine from N-acetyl-alpha-D-glucosamine 1-phosphate: step 1/1. Its pathway is bacterial outer membrane biogenesis; LPS lipid A biosynthesis. In terms of biological role, catalyzes the last two sequential reactions in the de novo biosynthetic pathway for UDP-N-acetylglucosamine (UDP-GlcNAc). The C-terminal domain catalyzes the transfer of acetyl group from acetyl coenzyme A to glucosamine-1-phosphate (GlcN-1-P) to produce N-acetylglucosamine-1-phosphate (GlcNAc-1-P), which is converted into UDP-GlcNAc by the transfer of uridine 5-monophosphate (from uridine 5-triphosphate), a reaction catalyzed by the N-terminal domain. This chain is Bifunctional protein GlmU, found in Herminiimonas arsenicoxydans.